The primary structure comprises 97 residues: MKRICSVYKSPRKNEMYLYVDKREALSRVPEALLVPFGAPQHVFDLLLTPERQLAREDVAKVLENIEKQGFHLQMPPGEEEYIEHLPEELLRMNDPL.

Positions 3–87 constitute a YcgL domain; it reads RICSVYKSPR…GEEEYIEHLP (85 aa).

The sequence is that of YcgL domain-containing protein PA14_47450 from Pseudomonas aeruginosa (strain UCBPP-PA14).